The following is a 110-amino-acid chain: V-type proton ATPase subunit G 1 (110 aa).

It belongs to the V-ATPase G subunit family. As to quaternary structure, V-ATPase is a heteromultimeric enzyme composed of a peripheral catalytic V1 complex (components A to H) attached to an integral membrane V0 proton pore complex (components: a, c, c', c'' and d).

Catalytic subunit of the peripheral V1 complex of vacuolar ATPase (V-ATPase). V-ATPase is responsible for acidifying a variety of intracellular compartments in eukaryotic cells. This is V-type proton ATPase subunit G 1 (VATG1) from Nicotiana tabacum (Common tobacco).